We begin with the raw amino-acid sequence, 177 residues long: Small ribosomal subunit protein eS10z (177 aa).

The interval 90-177 (TLKKSAKPGG…AAAPSGSGFP (88 aa)) is disordered. Residues 108–140 (DRQRGPPRSDGDRPRFGDRDGYRGGPRGGDEKG) are compositionally biased toward basic and acidic residues. The span at 141-150 (GAPADFQPSF) shows a compositional bias: low complexity. The segment covering 151–165 (QGGGGRPGFGRGAGG) has biased composition (gly residues). Low complexity predominate over residues 166 to 177 (YSAAAPSGSGFP).

This sequence belongs to the eukaryotic ribosomal protein eS10 family.

It localises to the cytoplasm. This is Small ribosomal subunit protein eS10z (RPS10A) from Arabidopsis thaliana (Mouse-ear cress).